An 827-amino-acid polypeptide reads, in one-letter code: Glycerol-3-phosphate acyltransferase (827 aa).

Positions 325-330 match the HXXXXD motif motif; the sequence is CHRSHM.

The protein belongs to the GPAT/DAPAT family.

The protein resides in the cell inner membrane. The catalysed reaction is sn-glycerol 3-phosphate + an acyl-CoA = a 1-acyl-sn-glycero-3-phosphate + CoA. It participates in phospholipid metabolism; CDP-diacylglycerol biosynthesis; CDP-diacylglycerol from sn-glycerol 3-phosphate: step 1/3. The polypeptide is Glycerol-3-phosphate acyltransferase (Shigella dysenteriae serotype 1 (strain Sd197)).